The chain runs to 110 residues: UPF0235 protein Mpop_2087 (110 aa).

This sequence belongs to the UPF0235 family.

The chain is UPF0235 protein Mpop_2087 from Methylorubrum populi (strain ATCC BAA-705 / NCIMB 13946 / BJ001) (Methylobacterium populi).